We begin with the raw amino-acid sequence, 333 residues long: Fructose-1,6-bisphosphatase class 1 (333 aa).

Residues E90, D112, L114, and D115 each contribute to the Mg(2+) site. Substrate is bound by residues 115 to 118, N207, and K273; that span reads DGSS. E279 is a Mg(2+) binding site.

Belongs to the FBPase class 1 family. Homotetramer. The cofactor is Mg(2+).

The protein localises to the cytoplasm. It catalyses the reaction beta-D-fructose 1,6-bisphosphate + H2O = beta-D-fructose 6-phosphate + phosphate. It participates in carbohydrate biosynthesis; gluconeogenesis. This Aromatoleum aromaticum (strain DSM 19018 / LMG 30748 / EbN1) (Azoarcus sp. (strain EbN1)) protein is Fructose-1,6-bisphosphatase class 1.